The following is a 150-amino-acid chain: UPF0336 protein SAV_4901 (150 aa).

Positions 8-126 (VGRSYPPTDP…GNDVVDVRGE (119 aa)) constitute a MaoC-like domain.

The protein belongs to the UPF0336 family.

This chain is UPF0336 protein SAV_4901, found in Streptomyces avermitilis (strain ATCC 31267 / DSM 46492 / JCM 5070 / NBRC 14893 / NCIMB 12804 / NRRL 8165 / MA-4680).